The chain runs to 442 residues: PCI domain-containing protein C1105.07c (442 aa).

Residues 224-415 form the PCI domain; that stretch reads VTFRYYLGRC…STLVLKKDPS (192 aa).

It localises to the cytoplasm. The protein resides in the nucleus envelope. In Schizosaccharomyces pombe (strain 972 / ATCC 24843) (Fission yeast), this protein is PCI domain-containing protein C1105.07c.